The following is a 1258-amino-acid chain: Structural polyprotein (1258 aa).

The segment at 41-75 is host transcription inhibition; it reads PQAQQMQQLIAAVNTLAIRQNGTRTPGQQRRKRQP. The interval 59–114 is disordered; the sequence is RQNGTRTPGQQRRKRQPNKPKRKQTPPKKQNPAKTKNKQKPQPPKPKKRKPGKRER. The Nuclear localization signal motif lies at 68–109; sequence QQRRKRQPNKPKRKQTPPKKQNPAKTKNKQKPQPPKPKKRKP. 2 stretches are compositionally biased toward basic residues: residues 69 to 84 and 93 to 114; these read QRRK…KQTP and TKNK…KRER. Residues 96–124 form a binding to the viral RNA region; it reads KQKPQPPKPKKRKPGKRERKCMKIENDCI. The segment at 109–123 is ribosome-binding; the sequence is PGKRERKCMKIENDC. Cysteines 123 and 138 form a disulfide. The Peptidase S3 domain occupies 123–271; that stretch reads CIFEVKLEGK…RITPEGTEEW (149 aa). Catalysis depends on H149, which acts as the Charge relay system. The Nuclear export signal signature appears at 154 to 164; sequence IDNPDLAKLAF. The segment at 165-170 is interaction with spike glycoprotein E2; that stretch reads KKSSKY. Residue D171 is the Charge relay system of the active site. A dimerization of the capsid protein region spans residues 193 to 203; sequence PEGHYNWHHGA. S223 acts as the Charge relay system in catalysis. The dimerization of the capsid protein stretch occupies residues 229–233; that stretch reads DNKGR. A functions as an uncleaved signal peptide for the precursor of protein E3/E2 region spans residues 272–284; the sequence is TALVTTACILSNL. 9 disulfide bridges follow: C279–C288, C293–C297, C296–C328, C356–C462, C359–C365, C428–C442, C490–C601, C538–C562, and C540–C557. An N-linked (GlcNAc...) asparagine; by host glycan is attached at N283. At 338 to 696 the chain is on the extracellular side; sequence GLTEDYKAYK…PHEIFSYYYG (359 aa). 2 interaction with host Mxra8 receptor regions span residues 363–366 and 399–401; these read QFCY and HSW. The interaction with host Mxra8 receptor stretch occupies residues 521-524; sequence TGNK. An N-linked (GlcNAc...) asparagine; by host glycan is attached at N537. Residues 553 to 559 are interaction with host Mxra8 receptor; that stretch reads EFDNCEV. A glycan (N-linked (GlcNAc...) asparagine; by host) is linked at N598. The chain crosses the membrane as a helical span at residues 697-717; the sequence is LYPATTVAVCVGLACVILLAL. The Cytoplasmic segment spans residues 718–758; that stretch reads SASCCLCVSARNKCLTPYALTPGAVVPCTLSLLCCAPRAKA. The interaction with the capsid protein stretch occupies residues 726 to 730; that stretch reads SARNK. Residues C731, C751, and C752 are each lipidated (S-palmitoyl cysteine; by host). Positions 731–751 are transient transmembrane before p62-6K protein processing; it reads CLTPYALTPGAVVPCTLSLLC. Cysteines 731 and 752 form a disulfide. Residues 759-773 are Extracellular-facing; it reads ATFAETAAYLWAENQ. The chain crosses the membrane as a helical span at residues 774–794; sequence TVFWMQFAIPVACFMIVTYCL. At 795-796 the chain is on the cytoplasmic side; that stretch reads RH. The helical transmembrane segment at 797 to 817 threads the bilayer; it reads LMLCCRTASFLVAVSLGMGAT. Extracellular segments lie at residues 818–819 and 820–1234; these read QA and YEHS…HTMG. 4 disulfides stabilise this stretch: C868-C933, C881-C913, C882-C915, and C887-C897. Residues 903-920 form an E1 fusion peptide loop region; the sequence is VYPFLWGGAYCFCDSENT. Residues N960 and N1089 are each glycosylated (N-linked (GlcNAc...) asparagine; by host). 4 disulfide bridges follow: C1078–C1090, C1120–C1195, C1125–C1199, and C1147–C1189. Residues 1235 to 1255 form a helical membrane-spanning segment; that stretch reads GATVVIAIGITIFLIVTCIAF. C1252 carries S-palmitoyl cysteine; by host lipidation. The Cytoplasmic portion of the chain corresponds to 1256–1258; it reads SRH.

Homodimer. Homomultimer. Interacts with host karyopherin KPNA4; this interaction allows the nuclear import of the viral capsid protein. Interacts with spike glycoprotein E2. Interacts with host IRAK1; the interaction leads to inhibition of IRAK1-dependent signaling. As to quaternary structure, the precursor of protein E3/E2 and E1 form a heterodimer shortly after synthesis. In terms of assembly, the precursor of protein E3/E2 and E1 form a heterodimer shortly after synthesis. Processing of the precursor of protein E3/E2 into E2 and E3 results in a heterodimer of the spike glycoproteins E2 and E1. Spike at virion surface are constituted of a trimer of E2-E1 heterodimers. After target cell attachment and endocytosis, E1 change conformation to form homotrimers. Interacts with 6K protein. Interacts with spike glycoprotein E1. Processing of the precursor of protein E3/E2 into E2 and E3 results in a heterodimer of the spike glycoproteins E2 and E1. Spike at virion surface are constituted of a trimer of E2-E1 heterodimers. Interacts with 6K protein. Interacts with host MXRA8; this interaction mediates virus entry. As to quaternary structure, oligomer. Interacts with spike glycoprotein E1. Interacts with spike glycoprotein E2. Structural polyprotein: Specific enzymatic cleavages in vivo yield mature proteins. Capsid protein is auto-cleaved during polyprotein translation, unmasking a signal peptide at the N-terminus of the precursor of E3/E2. The remaining polyprotein is then targeted to the host endoplasmic reticulum, where host signal peptidase cleaves it into pE2, 6K and E1 proteins. pE2 is further processed to mature E3 and E2 by host furin in trans-Golgi vesicle. Post-translationally, palmitoylated via thioester bonds. These palmitoylations may induce disruption of the C-terminus transmembrane. This would result in the reorientation of E2 C-terminus from lumenal to cytoplasmic side. In terms of processing, N-glycosylated. Palmitoylated via thioester bonds.

It is found in the virion. The protein localises to the host cytoplasm. It localises to the host cell membrane. Its subcellular location is the host nucleus. The protein resides in the virion membrane. It is found in the host Golgi apparatus. The protein localises to the host trans-Golgi network. It localises to the host endoplasmic reticulum. It catalyses the reaction Autocatalytic release of the core protein from the N-terminus of the togavirus structural polyprotein by hydrolysis of a -Trp-|-Ser- bond.. Forms an icosahedral capsid with a T=4 symmetry composed of 240 copies of the capsid protein surrounded by a lipid membrane through which penetrate 80 spikes composed of trimers of E1-E2 heterodimers. The capsid protein binds to the viral RNA genome at a site adjacent to a ribosome binding site for viral genome translation following genome release. Possesses a protease activity that results in its autocatalytic cleavage from the nascent structural protein. Following its self-cleavage, the capsid protein transiently associates with ribosomes, and within several minutes the protein binds to viral RNA and rapidly assembles into icosahedric core particles. The resulting nucleocapsid eventually associates with the cytoplasmic domain of the spike glycoprotein E2 at the cell membrane, leading to budding and formation of mature virions. In case of infection, new virions attach to target cells and after clathrin-mediated endocytosis their membrane fuses with the host endosomal membrane. This leads to the release of the nucleocapsid into the cytoplasm, followed by an uncoating event necessary for the genomic RNA to become accessible. The uncoating might be triggered by the interaction of capsid proteins with ribosomes. Binding of ribosomes would release the genomic RNA since the same region is genomic RNA-binding and ribosome-binding. Specifically inhibits interleukin-1 receptor-associated kinase 1/IRAK1-dependent signaling during viral entry, representing a means by which the alphaviruses may evade innate immune detection and activation prior to viral gene expression. Its function is as follows. Provides the signal sequence for the translocation of the precursor of protein E3/E2 to the host endoplasmic reticulum. Furin-cleaved E3 remains associated with spike glycoprotein E1 and mediates pH protection of the latter during the transport via the secretory pathway. After virion release from the host cell, the assembly protein E3 is gradually released in the extracellular space. In terms of biological role, plays a role in viral attachment to target host cell, by binding to the cell receptor MXRA8. Synthesized as a p62 precursor which is processed by furin at the cell membrane just before virion budding, giving rise to E2-E1 heterodimer. The p62-E1 heterodimer is stable, whereas E2-E1 is unstable and dissociate at low pH. p62 is processed at the last step, presumably to avoid E1 fusion activation before its final export to cell surface. E2 C-terminus contains a transitory transmembrane that would be disrupted by palmitoylation, resulting in reorientation of the C-terminal tail from lumenal to cytoplasmic side. This step is critical since E2 C-terminus is involved in budding by interacting with capsid proteins. This release of E2 C-terminus in cytoplasm occurs lately in protein export, and precludes premature assembly of particles at the endoplasmic reticulum membrane. Functionally, acts as a viroporin that participates in virus glycoprotein processing and transport to the plasma membrane, cell permeabilization and budding of viral particles. Disrupts the calcium homeostasis of the cell, probably at the endoplasmic reticulum level. This leads to cytoplasmic calcium elevation. Because of its lipophilic properties, the 6K protein is postulated to influence the selection of lipids that interact with the transmembrane domains of the glycoproteins, which, in turn, affects the deformability of the bilayer required for the extreme curvature that occurs as budding proceeds. Present in low amount in virions, about 3% compared to viral glycoproteins. Class II viral fusion protein. Fusion activity is inactive as long as E1 is bound to E2 in mature virion. After virus attachment to target cell and endocytosis, acidification of the endosome induce dissociation of E1/E2 heterodimer and concomitant trimerization of the E1 subunits. This E1 trimer is fusion active, and promotes release of viral nucleocapsid in cytoplasm after endosome and viral membrane fusion. Efficient fusion requires the presence of cholesterol and sphingolipid in the target membrane. The protein is Structural polyprotein of Middelburg virus.